The following is a 314-amino-acid chain: tRNA dimethylallyltransferase (314 aa).

9-16 (GPTAVGKT) lines the ATP pocket. A substrate-binding site is contributed by 11 to 16 (TAVGKT). Residues 34-37 (DSMQ) are interaction with substrate tRNA.

Belongs to the IPP transferase family. Monomer. Mg(2+) is required as a cofactor.

The catalysed reaction is adenosine(37) in tRNA + dimethylallyl diphosphate = N(6)-dimethylallyladenosine(37) in tRNA + diphosphate. In terms of biological role, catalyzes the transfer of a dimethylallyl group onto the adenine at position 37 in tRNAs that read codons beginning with uridine, leading to the formation of N6-(dimethylallyl)adenosine (i(6)A). This chain is tRNA dimethylallyltransferase, found in Clostridium tetani (strain Massachusetts / E88).